Reading from the N-terminus, the 590-residue chain is Peroxisomal targeting signal receptor (590 aa).

A Glycyl cysteine thioester (Cys-Gly) (interchain with G-Cter in ubiquitin) cross-link involves residue cysteine 6. Positions 7-29 (SVGSNPLAQLNKHAQGQGSSLSN) are amphipathic helix 1 (AH1). Lysine 18 participates in a covalent cross-link: Glycyl lysine isopeptide (Lys-Gly) (interchain with G-Cter in ubiquitin). Over residues 18-30 (KHAQGQGSSLSNT) the composition is skewed to polar residues. Positions 18 to 45 (KHAQGQGSSLSNTHVRHSGGVSGSNVFR) are disordered. An amphipathic helix 2 (AH2) region spans residues 56 to 74 (RQQLNSFMSQPMRLGEDKM). 3 consecutive short sequence motifs (wxxxF/Y motif) follow at residues 108–112 (WTREF), 139–143 (WKFRY), and 178–182 (WNDKF). An amphipathic helix 4 (AH4) region spans residues 227–243 (FQEVWDSIQQDTEEMLS). TPR repeat units lie at residues 285–319 (NPNA…DPKH), 320–353 (VDAW…DPNN), 424–457 (PDIQ…NPND), 459–491 (LMWN…KPSF), and 493–525 (RARY…HDVE).

It belongs to the peroxisomal targeting signal receptor family. In terms of assembly, interacts (via WxxxF/Y and LVxEF motifs) with PEX14; promoting translocation through the PEX13-PEX14 docking complex. Post-translationally, monoubiquitinated at Cys-6 by PEX2 during PEX5 passage through the retrotranslocation channel: monoubiquitination acts as a signal for PEX5 extraction and is required for proper export from peroxisomes and recycling. When PEX5 recycling is compromised, polyubiquitinated at Lys-18 by PEX10 during its passage through the retrotranslocation channel, leading to its degradation.

The protein resides in the cytoplasm. The protein localises to the cytosol. It is found in the peroxisome matrix. In terms of biological role, receptor that mediates peroxisomal import of proteins containing a C-terminal PTS1-type tripeptide peroxisomal targeting signal (SKL-type). Binds to cargo proteins containing a PTS1 peroxisomal targeting signal in the cytosol, and translocates them into the peroxisome matrix by passing through the PEX13-PEX14 docking complex along with cargo proteins. PEX5 receptor is then retrotranslocated into the cytosol, leading to release of bound cargo in the peroxisome matrix, and reset for a subsequent peroxisome import cycle. In Candida glabrata (strain ATCC 2001 / BCRC 20586 / JCM 3761 / NBRC 0622 / NRRL Y-65 / CBS 138) (Yeast), this protein is Peroxisomal targeting signal receptor (PEX5).